We begin with the raw amino-acid sequence, 247 residues long: Carboxy-S-adenosyl-L-methionine synthase (247 aa).

Residues tyrosine 39, 64–66 (GCS), 89–90 (DN), 117–118 (DI), asparagine 132, and arginine 199 each bind S-adenosyl-L-methionine.

Belongs to the class I-like SAM-binding methyltransferase superfamily. Cx-SAM synthase family. In terms of assembly, homodimer.

The catalysed reaction is prephenate + S-adenosyl-L-methionine = carboxy-S-adenosyl-L-methionine + 3-phenylpyruvate + H2O. Functionally, catalyzes the conversion of S-adenosyl-L-methionine (SAM) to carboxy-S-adenosyl-L-methionine (Cx-SAM). The sequence is that of Carboxy-S-adenosyl-L-methionine synthase from Salmonella choleraesuis (strain SC-B67).